Consider the following 427-residue polypeptide: Histidinol dehydrogenase (427 aa).

NAD(+) contacts are provided by tyrosine 125, glutamine 186, and asparagine 209. Serine 234, glutamine 256, and histidine 259 together coordinate substrate. The Zn(2+) site is built by glutamine 256 and histidine 259. Active-site proton acceptor residues include glutamate 325 and histidine 326. Histidine 326, aspartate 359, glutamate 413, and histidine 419 together coordinate substrate. Aspartate 359 lines the Zn(2+) pocket. Position 419 (histidine 419) interacts with Zn(2+).

The protein belongs to the histidinol dehydrogenase family. Requires Zn(2+) as cofactor.

The catalysed reaction is L-histidinol + 2 NAD(+) + H2O = L-histidine + 2 NADH + 3 H(+). Its pathway is amino-acid biosynthesis; L-histidine biosynthesis; L-histidine from 5-phospho-alpha-D-ribose 1-diphosphate: step 9/9. In terms of biological role, catalyzes the sequential NAD-dependent oxidations of L-histidinol to L-histidinaldehyde and then to L-histidine. The sequence is that of Histidinol dehydrogenase from Leptospira interrogans serogroup Icterohaemorrhagiae serovar copenhageni (strain Fiocruz L1-130).